Reading from the N-terminus, the 311-residue chain is L-lactate dehydrogenase (311 aa).

Residues Val-12, Asp-33, Lys-38, Tyr-63, and Gly-77 to Ala-78 each bind NAD(+). Substrate contacts are provided by residues Gln-80, Arg-86, and Asn-118 to Asp-121. NAD(+) contacts are provided by residues Val-116–Asn-118 and Ser-141. Asp-146–Arg-149 contacts substrate. Residues Arg-151 and His-166 each coordinate beta-D-fructose 1,6-bisphosphate. The Proton acceptor role is filled by His-173. Residue Tyr-219 is modified to Phosphotyrosine. Thr-228 serves as a coordination point for substrate.

The protein belongs to the LDH/MDH superfamily. LDH family. As to quaternary structure, homotetramer.

It is found in the cytoplasm. The enzyme catalyses (S)-lactate + NAD(+) = pyruvate + NADH + H(+). Its pathway is fermentation; pyruvate fermentation to lactate; (S)-lactate from pyruvate: step 1/1. Allosterically activated by fructose 1,6-bisphosphate (FBP). Catalyzes the conversion of lactate to pyruvate. This is L-lactate dehydrogenase from Thermoanaerobacter pseudethanolicus (strain ATCC 33223 / 39E) (Clostridium thermohydrosulfuricum).